A 349-amino-acid chain; its full sequence is Alpha-centractin (349 aa).

M1 is modified (N-acetylmethionine).

It belongs to the actin family. ARP1 subfamily. As to quaternary structure, part of the ACTR1A/ACTB filament around which the dynactin complex is built. The filament contains 8 copies of ACTR1A and 1 ACTB. Interacts with dynein and adapters such as BICD2. Interacts with BCCIP (isoform 2/alpha).

The protein resides in the cytoplasm. It is found in the cytoskeleton. It localises to the microtubule organizing center. Its subcellular location is the centrosome. The protein localises to the cell cortex. Part of the ACTR1A/ACTB filament around which the dynactin complex is built. The dynactin multiprotein complex activates the molecular motor dynein for ultra-processive transport along microtubules. This is Alpha-centractin (ACTR1A) from Sus scrofa (Pig).